The sequence spans 352 residues: UDP-N-acetylglucosamine--N-acetylmuramyl-(pentapeptide) pyrophosphoryl-undecaprenol N-acetylglucosamine transferase 2 (352 aa).

UDP-N-acetyl-alpha-D-glucosamine contacts are provided by residues 11–13, R164, S194, and Q289; that span reads SAG.

It belongs to the glycosyltransferase 28 family. MurG subfamily.

It is found in the cell membrane. The enzyme catalyses di-trans,octa-cis-undecaprenyl diphospho-N-acetyl-alpha-D-muramoyl-L-alanyl-D-glutamyl-meso-2,6-diaminopimeloyl-D-alanyl-D-alanine + UDP-N-acetyl-alpha-D-glucosamine = di-trans,octa-cis-undecaprenyl diphospho-[N-acetyl-alpha-D-glucosaminyl-(1-&gt;4)]-N-acetyl-alpha-D-muramoyl-L-alanyl-D-glutamyl-meso-2,6-diaminopimeloyl-D-alanyl-D-alanine + UDP + H(+). Its pathway is cell wall biogenesis; peptidoglycan biosynthesis. In terms of biological role, cell wall formation. Catalyzes the transfer of a GlcNAc subunit on undecaprenyl-pyrophosphoryl-MurNAc-pentapeptide (lipid intermediate I) to form undecaprenyl-pyrophosphoryl-MurNAc-(pentapeptide)GlcNAc (lipid intermediate II). The polypeptide is UDP-N-acetylglucosamine--N-acetylmuramyl-(pentapeptide) pyrophosphoryl-undecaprenol N-acetylglucosamine transferase 2 (Bacillus cereus (strain ATCC 10987 / NRS 248)).